Here is a 256-residue protein sequence, read N- to C-terminus: UPF0246 protein Sde_3824 (256 aa).

This sequence belongs to the UPF0246 family.

The polypeptide is UPF0246 protein Sde_3824 (Saccharophagus degradans (strain 2-40 / ATCC 43961 / DSM 17024)).